The following is a 302-amino-acid chain: 4-diphosphocytidyl-2-C-methyl-D-erythritol kinase (302 aa).

Lys27 is a catalytic residue. 110–120 (PMGGGVGGGSS) contributes to the ATP binding site. The active site involves Asp152.

Belongs to the GHMP kinase family. IspE subfamily.

The enzyme catalyses 4-CDP-2-C-methyl-D-erythritol + ATP = 4-CDP-2-C-methyl-D-erythritol 2-phosphate + ADP + H(+). The protein operates within isoprenoid biosynthesis; isopentenyl diphosphate biosynthesis via DXP pathway; isopentenyl diphosphate from 1-deoxy-D-xylulose 5-phosphate: step 3/6. In terms of biological role, catalyzes the phosphorylation of the position 2 hydroxy group of 4-diphosphocytidyl-2C-methyl-D-erythritol. The polypeptide is 4-diphosphocytidyl-2-C-methyl-D-erythritol kinase (Mannheimia succiniciproducens (strain KCTC 0769BP / MBEL55E)).